We begin with the raw amino-acid sequence, 574 residues long: Glycine--tRNA ligase (574 aa).

Residues Arg-96 and Glu-162 each coordinate substrate. Residues 194 to 196 (RNE), 204 to 209 (IRLREF), 327 to 328 (EC), and 450 to 453 (GIDR) contribute to the ATP site. Substrate is bound at residue 209 to 213 (FTQAE). Residue 446 to 450 (EPSYG) participates in substrate binding.

The protein belongs to the class-II aminoacyl-tRNA synthetase family.

The protein localises to the cytoplasm. The catalysed reaction is tRNA(Gly) + glycine + ATP = glycyl-tRNA(Gly) + AMP + diphosphate. Its function is as follows. Catalyzes the attachment of glycine to tRNA(Gly). This is Glycine--tRNA ligase from Methanococcus vannielii (strain ATCC 35089 / DSM 1224 / JCM 13029 / OCM 148 / SB).